A 240-amino-acid polypeptide reads, in one-letter code: Mannosyl-D-glycerate transport/metabolism system repressor MngR (240 aa).

The HTH gntR-type domain occupies 4-72; that stretch reads KPLYRQIADR…QGSGTYVKEE (69 aa). The H-T-H motif DNA-binding region spans 32 to 51; the sequence is ESALQTEFGVSRVTVRQALR.

Represses mngA and mngB. Regulates its own expression. The chain is Mannosyl-D-glycerate transport/metabolism system repressor MngR (mngR) from Escherichia coli (strain K12).